Reading from the N-terminus, the 272-residue chain is HMP-PP phosphatase (272 aa).

Asp-8 serves as the catalytic Nucleophile. Mg(2+) is bound by residues Asp-8, Asp-10, and Asp-212.

Belongs to the HAD-like hydrolase superfamily. Cof family. Mg(2+) serves as cofactor.

The catalysed reaction is 4-amino-2-methyl-5-(diphosphooxymethyl)pyrimidine + H2O = 4-amino-2-methyl-5-(phosphooxymethyl)pyrimidine + phosphate + H(+). Its function is as follows. Catalyzes the hydrolysis of 4-amino-2-methyl-5-hydroxymethylpyrimidine pyrophosphate (HMP-PP) to 4-amino-2-methyl-5-hydroxymethylpyrimidine phosphate (HMP-P). This Escherichia coli O157:H7 protein is HMP-PP phosphatase.